The sequence spans 196 residues: C-type lectin domain family 2 member F (196 aa).

Positions 1-21 are disordered; sequence MNAQCLKKPEEGESSPGTGDK. The Cytoplasmic segment spans residues 1–41; sequence MNAQCLKKPEEGESSPGTGDKILQRNSLRAISPESSAKLYC. The chain crosses the membrane as a helical; Signal-anchor for type II membrane protein span at residues 42-62; sequence CCGVIMVLTVAVVALSVALPA. The Extracellular segment spans residues 63-196; that stretch reads TKTEQILINK…SRSSNYMLQC (134 aa). Cys-77 and Cys-88 are disulfide-bonded. One can recognise a C-type lectin domain in the interval 84 to 187; that stretch reads VGNKCFYFSE…DYIPRKWICS (104 aa). Asn-97 carries N-linked (GlcNAc...) asparagine glycosylation. Cys-105 and Cys-186 are disulfide-bonded.

The protein localises to the cell membrane. In terms of biological role, lectin-type cell surface receptor. This is C-type lectin domain family 2 member F (Clec2f) from Mus musculus (Mouse).